A 450-amino-acid chain; its full sequence is Flavin-containing monooxygenase FMO GS-OX-like 5 (450 aa).

17 to 22 (GAGPAG) lines the FAD pocket. 215 to 220 (GNSSSA) contacts NADP(+).

This sequence belongs to the FMO family. FAD serves as cofactor.

Its function is as follows. Catalyzes the conversion of methylthioalkyl glucosinolates of any chain length into methylsulfinylalkyl glucosinolates. This Arabidopsis thaliana (Mouse-ear cress) protein is Flavin-containing monooxygenase FMO GS-OX-like 5.